We begin with the raw amino-acid sequence, 214 residues long: ATP-dependent dethiobiotin synthetase BioD (214 aa).

10–15 (GIGKTY) serves as a coordination point for ATP. A Mg(2+)-binding site is contributed by Thr-14. Residue Lys-35 is part of the active site. Position 39 (Thr-39) interacts with substrate. Residues Asp-44, 109-112 (EGAG), and 169-170 (NC) each bind ATP. Residues Asp-44 and Glu-109 each contribute to the Mg(2+) site.

This sequence belongs to the dethiobiotin synthetase family. As to quaternary structure, homodimer. The cofactor is Mg(2+).

Its subcellular location is the cytoplasm. It carries out the reaction (7R,8S)-7,8-diammoniononanoate + CO2 + ATP = (4R,5S)-dethiobiotin + ADP + phosphate + 3 H(+). The protein operates within cofactor biosynthesis; biotin biosynthesis; biotin from 7,8-diaminononanoate: step 1/2. Functionally, catalyzes a mechanistically unusual reaction, the ATP-dependent insertion of CO2 between the N7 and N8 nitrogen atoms of 7,8-diaminopelargonic acid (DAPA, also called 7,8-diammoniononanoate) to form a ureido ring. This chain is ATP-dependent dethiobiotin synthetase BioD, found in Methanocaldococcus jannaschii (strain ATCC 43067 / DSM 2661 / JAL-1 / JCM 10045 / NBRC 100440) (Methanococcus jannaschii).